We begin with the raw amino-acid sequence, 278 residues long: Diaminopimelate epimerase (278 aa).

Substrate contacts are provided by N13, Q46, and N67. Residue C76 is the Proton donor of the active site. Residues 77–78, N160, N193, and 211–212 contribute to the substrate site; these read GN and ER. C220 acts as the Proton acceptor in catalysis. A substrate-binding site is contributed by 221–222; it reads GT.

The protein belongs to the diaminopimelate epimerase family. Homodimer.

It localises to the cytoplasm. The enzyme catalyses (2S,6S)-2,6-diaminopimelate = meso-2,6-diaminopimelate. Its pathway is amino-acid biosynthesis; L-lysine biosynthesis via DAP pathway; DL-2,6-diaminopimelate from LL-2,6-diaminopimelate: step 1/1. Catalyzes the stereoinversion of LL-2,6-diaminopimelate (L,L-DAP) to meso-diaminopimelate (meso-DAP), a precursor of L-lysine and an essential component of the bacterial peptidoglycan. This chain is Diaminopimelate epimerase, found in Thioalkalivibrio sulfidiphilus (strain HL-EbGR7).